We begin with the raw amino-acid sequence, 399 residues long: Elongation factor Tu (399 aa).

In terms of domain architecture, tr-type G spans 10–204 (KPHVNIGTIG…AVDEAIPEPE (195 aa)). A G1 region spans residues 19–26 (GHVDHGKT). 19–26 (GHVDHGKT) contributes to the GTP binding site. Thr-26 is a binding site for Mg(2+). A G2 region spans residues 60-64 (GITIN). Residues 81-84 (DCPG) are G3. GTP is bound by residues 81–85 (DCPGH) and 136–139 (NKCD). The interval 136-139 (NKCD) is G4. The interval 174-176 (SGL) is G5.

Belongs to the TRAFAC class translation factor GTPase superfamily. Classic translation factor GTPase family. EF-Tu/EF-1A subfamily. Monomer.

It is found in the cytoplasm. It carries out the reaction GTP + H2O = GDP + phosphate + H(+). Functionally, GTP hydrolase that promotes the GTP-dependent binding of aminoacyl-tRNA to the A-site of ribosomes during protein biosynthesis. This Parasynechococcus marenigrum (strain WH8102) protein is Elongation factor Tu.